The chain runs to 126 residues: H2B.U histone 2 (126 aa).

The interval 1–35 (MPEPSRSTPAPKKGSKKAITKAQKKDGKKRKRGRK) is disordered. Pro-2 is subject to N-acetylproline. The residue at position 3 (Glu-3) is an ADP-ribosyl glutamic acid. An ADP-ribosylserine modification is found at Ser-7. The residue at position 12 (Lys-12) is an N6-(beta-hydroxybutyryl)lysine; alternate. An N6-acetyllysine; alternate mark is found at Lys-12 and Lys-13. An N6-crotonyllysine; alternate mark is found at Lys-12 and Lys-13. The residue at position 12 (Lys-12) is an N6-lactoyllysine; alternate. Lys-13 carries the N6-(2-hydroxyisobutyryl)lysine; alternate modification. Ser-15 is modified (phosphoserine; by STK4/MST1). N6-acetyllysine; alternate occurs at positions 16, 17, 21, and 24. Lys-16, Lys-17, Lys-21, and Lys-24 each carry N6-crotonyllysine; alternate. N6-lactoyllysine; alternate occurs at positions 16, 17, 21, and 24. An N6-glutaryllysine; alternate modification is found at Lys-17. Lys-21 carries the post-translational modification N6-(beta-hydroxybutyryl)lysine; alternate. N6-(2-hydroxyisobutyryl)lysine; alternate is present on residues Lys-21 and Lys-24. N6-butyryllysine; alternate is present on Lys-21. A Glycyl lysine isopeptide (Lys-Gly) (interchain with G-Cter in SUMO2); alternate cross-link involves residue Lys-21. The residue at position 25 (Lys-25) is an N6-(2-hydroxyisobutyryl)lysine. Residue Lys-35 is modified to N6-(beta-hydroxybutyryl)lysine; alternate. Residue Lys-35 is modified to N6-crotonyllysine; alternate. Lys-35 carries the N6-(2-hydroxyisobutyryl)lysine; alternate modification. N6-glutaryllysine; alternate is present on Lys-35. At Lys-35 the chain carries N6-succinyllysine; alternate. Lys-35 is covalently cross-linked (Glycyl lysine isopeptide (Lys-Gly) (interchain with G-Cter in ubiquitin); alternate). Glu-36 is modified (polyADP-ribosyl glutamic acid). Ser-37 carries the post-translational modification Phosphoserine; by AMPK. At Lys-44 the chain carries N6-lactoyllysine; alternate. N6-(2-hydroxyisobutyryl)lysine; alternate occurs at positions 44, 47, and 58. 2 positions are modified to N6-glutaryllysine; alternate: Lys-44 and Lys-47. Lys-47 carries the N6-methyllysine; alternate modification. At Lys-58 the chain carries N6,N6-dimethyllysine; alternate. Position 80 is a dimethylated arginine (Arg-80). Residue Lys-86 is modified to N6-acetyllysine; alternate. Residue Lys-86 is modified to N6-lactoyllysine; alternate. Lys-86 bears the N6-(2-hydroxyisobutyryl)lysine; alternate mark. Lys-86 bears the N6,N6,N6-trimethyllysine; alternate mark. Residues Arg-87 and Arg-93 each carry the omega-N-methylarginine modification. Position 109 is an N6-(beta-hydroxybutyryl)lysine; alternate (Lys-109). N6-lactoyllysine; alternate is present on Lys-109. The residue at position 109 (Lys-109) is an N6-(2-hydroxyisobutyryl)lysine; alternate. N6-glutaryllysine; alternate is present on Lys-109. N6-methyllysine; alternate is present on Lys-109. O-linked (GlcNAc) serine glycosylation is present at Ser-113. Thr-116 bears the Phosphothreonine mark. Lys-117 carries the post-translational modification N6-(beta-hydroxybutyryl)lysine; alternate. N6-lactoyllysine; alternate is present on residues Lys-117 and Lys-121. An N6-(2-hydroxyisobutyryl)lysine; alternate mark is found at Lys-117 and Lys-121. Lys-117 and Lys-121 each carry N6-glutaryllysine; alternate. N6-succinyllysine; alternate occurs at positions 117 and 121. Lys-117 is subject to N6-methylated lysine; alternate. A Glycyl lysine isopeptide (Lys-Gly) (interchain with G-Cter in ubiquitin); alternate cross-link involves residue Lys-121.

It belongs to the histone H2B family. As to quaternary structure, the nucleosome is a histone octamer containing two molecules each of H2A, H2B, H3 and H4 assembled in one H3-H4 heterotetramer and two H2A-H2B heterodimers. The octamer wraps approximately 147 bp of DNA. In terms of processing, monoubiquitination at Lys-35 (H2BK34Ub) by the MSL1/MSL2 dimer is required for histone H3 'Lys-4' (H3K4me) and 'Lys-79' (H3K79me) methylation and transcription activation at specific gene loci, such as HOXA9 and MEIS1 loci. Similarly, monoubiquitination at Lys-121 (H2BK120Ub) by the RNF20/40 complex gives a specific tag for epigenetic transcriptional activation and is also prerequisite for histone H3 'Lys-4' and 'Lys-79' methylation. It also functions cooperatively with the FACT dimer to stimulate elongation by RNA polymerase II. H2BK120Ub also acts as a regulator of mRNA splicing: deubiquitination by USP49 is required for efficient cotranscriptional splicing of a large set of exons. Post-translationally, phosphorylated on Ser-15 (H2BS14ph) by STK4/MST1 during apoptosis; which facilitates apoptotic chromatin condensation. Also phosphorylated on Ser-15 in response to DNA double strand breaks (DSBs), and in correlation with somatic hypermutation and immunoglobulin class-switch recombination. Phosphorylation at Ser-37 (H2BS36ph) by AMPK in response to stress promotes transcription. GlcNAcylation at Ser-113 promotes monoubiquitination of Lys-121. It fluctuates in response to extracellular glucose, and associates with transcribed genes. In terms of processing, ADP-ribosylated by PARP1 or PARP2 on Ser-7 (H2BS6ADPr) in response to DNA damage. H2BS6ADPr promotes recruitment of CHD1L. Mono-ADP-ribosylated on Glu-3 (H2BE2ADPr) by PARP3 in response to single-strand breaks. Poly ADP-ribosylation on Glu-36 (H2BE35ADPr) by PARP1 regulates adipogenesis: it inhibits phosphorylation at Ser-37 (H2BS36ph), thereby blocking expression of pro-adipogenetic genes. Post-translationally, crotonylation (Kcr) is specifically present in male germ cells and marks testis-specific genes in post-meiotic cells, including X-linked genes that escape sex chromosome inactivation in haploid cells. Crotonylation marks active promoters and enhancers and confers resistance to transcriptional repressors. It is also associated with post-meiotically activated genes on autosomes. Hydroxybutyrylation of histones is induced by starvation. In terms of processing, lactylated in macrophages by EP300/P300 by using lactoyl-CoA directly derived from endogenous or exogenous lactate, leading to stimulates gene transcription.

The protein localises to the nucleus. It localises to the chromosome. Functionally, core component of nucleosome. Nucleosomes wrap and compact DNA into chromatin, limiting DNA accessibility to the cellular machineries which require DNA as a template. Histones thereby play a central role in transcription regulation, DNA repair, DNA replication and chromosomal stability. DNA accessibility is regulated via a complex set of post-translational modifications of histones, also called histone code, and nucleosome remodeling. This chain is H2B.U histone 2, found in Mus musculus (Mouse).